Consider the following 197-residue polypeptide: Putative eggshell protein (197 aa).

A signal peptide spans 1–17 (MKFHLVLLLAIVPLTLA).

This Fasciola hepatica (Liver fluke) protein is Putative eggshell protein.